The following is a 505-amino-acid chain: Deoxyguanosinetriphosphate triphosphohydrolase (505 aa).

An HD domain is found at 66–273 (RLTHSMEVQQ…MEAADDISYC (208 aa)).

The protein belongs to the dGTPase family. Type 1 subfamily. In terms of assembly, homotetramer. Mg(2+) serves as cofactor.

It catalyses the reaction dGTP + H2O = 2'-deoxyguanosine + triphosphate + H(+). DGTPase preferentially hydrolyzes dGTP over the other canonical NTPs. This Escherichia coli O157:H7 protein is Deoxyguanosinetriphosphate triphosphohydrolase.